The sequence spans 478 residues: Glutamate--tRNA ligase 1 (478 aa).

A 'HIGH' region motif is present at residues 10 to 20; it reads PSPTGFLHIGG. Positions 242 to 246 match the 'KMSKS' region motif; that stretch reads KLSKR. Lys-245 lines the ATP pocket.

This sequence belongs to the class-I aminoacyl-tRNA synthetase family. Glutamate--tRNA ligase type 1 subfamily. In terms of assembly, monomer.

Its subcellular location is the cytoplasm. It carries out the reaction tRNA(Glu) + L-glutamate + ATP = L-glutamyl-tRNA(Glu) + AMP + diphosphate. Its function is as follows. Catalyzes the attachment of glutamate to tRNA(Glu) in a two-step reaction: glutamate is first activated by ATP to form Glu-AMP and then transferred to the acceptor end of tRNA(Glu). The protein is Glutamate--tRNA ligase 1 of Orientia tsutsugamushi (strain Boryong) (Rickettsia tsutsugamushi).